Here is a 309-residue protein sequence, read N- to C-terminus: NAD kinase (309 aa).

The active-site Proton acceptor is the aspartate 89. NAD(+) contacts are provided by residues 89 to 90 (DG), 163 to 164 (NE), histidine 174, arginine 191, aspartate 193, and 204 to 209 (TAYALS).

Belongs to the NAD kinase family. It depends on a divalent metal cation as a cofactor.

The protein resides in the cytoplasm. It carries out the reaction NAD(+) + ATP = ADP + NADP(+) + H(+). Functionally, involved in the regulation of the intracellular balance of NAD and NADP, and is a key enzyme in the biosynthesis of NADP. Catalyzes specifically the phosphorylation on 2'-hydroxyl of the adenosine moiety of NAD to yield NADP. This Shewanella sp. (strain ANA-3) protein is NAD kinase.